Consider the following 158-residue polypeptide: 6,7-dimethyl-8-ribityllumazine synthase (158 aa).

5-amino-6-(D-ribitylamino)uracil-binding positions include Phe23, 61–63 (SFE), and 85–87 (AVI). 90 to 91 (DT) contributes to the (2S)-2-hydroxy-3-oxobutyl phosphate binding site. Catalysis depends on His93, which acts as the Proton donor. Phe118 provides a ligand contact to 5-amino-6-(D-ribitylamino)uracil. Arg132 contributes to the (2S)-2-hydroxy-3-oxobutyl phosphate binding site.

It belongs to the DMRL synthase family.

The catalysed reaction is (2S)-2-hydroxy-3-oxobutyl phosphate + 5-amino-6-(D-ribitylamino)uracil = 6,7-dimethyl-8-(1-D-ribityl)lumazine + phosphate + 2 H2O + H(+). Its pathway is cofactor biosynthesis; riboflavin biosynthesis; riboflavin from 2-hydroxy-3-oxobutyl phosphate and 5-amino-6-(D-ribitylamino)uracil: step 1/2. Functionally, catalyzes the formation of 6,7-dimethyl-8-ribityllumazine by condensation of 5-amino-6-(D-ribitylamino)uracil with 3,4-dihydroxy-2-butanone 4-phosphate. This is the penultimate step in the biosynthesis of riboflavin. The polypeptide is 6,7-dimethyl-8-ribityllumazine synthase (Prochlorococcus marinus (strain NATL1A)).